The primary structure comprises 197 residues: ATP-dependent Clp protease proteolytic subunit 1 (197 aa).

Catalysis depends on Ser88, which acts as the Nucleophile. The active site involves His113.

The protein belongs to the peptidase S14 family. As to quaternary structure, fourteen ClpP subunits assemble into 2 heptameric rings which stack back to back to give a disk-like structure with a central cavity, resembling the structure of eukaryotic proteasomes.

The protein localises to the cytoplasm. It carries out the reaction Hydrolysis of proteins to small peptides in the presence of ATP and magnesium. alpha-casein is the usual test substrate. In the absence of ATP, only oligopeptides shorter than five residues are hydrolyzed (such as succinyl-Leu-Tyr-|-NHMec, and Leu-Tyr-Leu-|-Tyr-Trp, in which cleavage of the -Tyr-|-Leu- and -Tyr-|-Trp bonds also occurs).. In terms of biological role, cleaves peptides in various proteins in a process that requires ATP hydrolysis. Has a chymotrypsin-like activity. Plays a major role in the degradation of misfolded proteins. The protein is ATP-dependent Clp protease proteolytic subunit 1 of Leifsonia xyli subsp. xyli (strain CTCB07).